Here is a 132-residue protein sequence, read N- to C-terminus: ATP synthase epsilon chain, chloroplastic (132 aa).

This sequence belongs to the ATPase epsilon chain family. F-type ATPases have 2 components, CF(1) - the catalytic core - and CF(0) - the membrane proton channel. CF(1) has five subunits: alpha(3), beta(3), gamma(1), delta(1), epsilon(1). CF(0) has three main subunits: a, b and c.

It is found in the plastid. The protein resides in the chloroplast thylakoid membrane. Its function is as follows. Produces ATP from ADP in the presence of a proton gradient across the membrane. This Adiantum capillus-veneris (Maidenhair fern) protein is ATP synthase epsilon chain, chloroplastic.